The sequence spans 456 residues: Methylenetetrahydrofolate--tRNA-(uracil-5-)-methyltransferase TrmFO (456 aa).

9-14 (GGGMAG) serves as a coordination point for FAD.

This sequence belongs to the MnmG family. TrmFO subfamily. The cofactor is FAD.

The protein localises to the cytoplasm. The enzyme catalyses uridine(54) in tRNA + (6R)-5,10-methylene-5,6,7,8-tetrahydrofolate + NADH + H(+) = 5-methyluridine(54) in tRNA + (6S)-5,6,7,8-tetrahydrofolate + NAD(+). It carries out the reaction uridine(54) in tRNA + (6R)-5,10-methylene-5,6,7,8-tetrahydrofolate + NADPH + H(+) = 5-methyluridine(54) in tRNA + (6S)-5,6,7,8-tetrahydrofolate + NADP(+). Functionally, catalyzes the folate-dependent formation of 5-methyl-uridine at position 54 (M-5-U54) in all tRNAs. The chain is Methylenetetrahydrofolate--tRNA-(uracil-5-)-methyltransferase TrmFO from Novosphingobium aromaticivorans (strain ATCC 700278 / DSM 12444 / CCUG 56034 / CIP 105152 / NBRC 16084 / F199).